A 192-amino-acid chain; its full sequence is Probable GTP-binding protein EngB (192 aa).

The EngB-type G domain maps to 22 to 192 (GRPEIVFVGR…LLERLDLFSQ (171 aa)). GTP contacts are provided by residues 30–37 (GRSNVGKS), 57–61 (GKTRL), 75–78 (DLPG), 142–145 (TKWD), and 172–174 (YSS). Mg(2+) contacts are provided by serine 37 and threonine 59.

It belongs to the TRAFAC class TrmE-Era-EngA-EngB-Septin-like GTPase superfamily. EngB GTPase family. The cofactor is Mg(2+).

Functionally, necessary for normal cell division and for the maintenance of normal septation. This is Probable GTP-binding protein EngB from Chlorobaculum parvum (strain DSM 263 / NCIMB 8327) (Chlorobium vibrioforme subsp. thiosulfatophilum).